We begin with the raw amino-acid sequence, 244 residues long: 6-carboxyhexanoate--CoA ligase (244 aa).

It belongs to the BioW family. In terms of assembly, homodimer. Mg(2+) is required as a cofactor.

The catalysed reaction is heptanedioate + ATP + CoA = 6-carboxyhexanoyl-CoA + AMP + diphosphate. It participates in metabolic intermediate metabolism; pimeloyl-CoA biosynthesis; pimeloyl-CoA from pimelate: step 1/1. Its function is as follows. Catalyzes the transformation of pimelate into pimeloyl-CoA with concomitant hydrolysis of ATP to AMP. This is 6-carboxyhexanoate--CoA ligase from Methanococcus maripaludis (strain DSM 14266 / JCM 13030 / NBRC 101832 / S2 / LL).